The primary structure comprises 367 residues: Probable protein phosphatase 2C 57 (367 aa).

A disordered region spans residues 1-29 (MEEHRLGGGGGGGGGGGRPPIPGAAGRKL). Residues 7–18 (GGGGGGGGGGGR) are compositionally biased toward gly residues. The region spanning 67 to 331 (RSGGWADIGS…DNLSVVVICF (265 aa)) is the PPM-type phosphatase domain. Positions 111, 112, 279, and 322 each coordinate Mn(2+).

This sequence belongs to the PP2C family. Mg(2+) is required as a cofactor. It depends on Mn(2+) as a cofactor.

It carries out the reaction O-phospho-L-seryl-[protein] + H2O = L-seryl-[protein] + phosphate. It catalyses the reaction O-phospho-L-threonyl-[protein] + H2O = L-threonyl-[protein] + phosphate. In Oryza sativa subsp. japonica (Rice), this protein is Probable protein phosphatase 2C 57.